The following is a 46-amino-acid chain: U1-plectoxin-Pt1f (46 aa).

Intrachain disulfides connect Cys4-Cys18, Cys11-Cys24, Cys17-Cys35, Cys21-Cys44, and Cys26-Cys33.

The protein belongs to the neurotoxin 02 (plectoxin) family. 02 (plectoxin) subfamily. As to expression, expressed by the venom gland.

Its subcellular location is the secreted. Its function is as follows. Potent toxin that may paralyze and/or kill insect pests such as H.virescens (lepidoptera), S.exigua (beet armyworm) and M.sexta (tobacco hornworm). The chain is U1-plectoxin-Pt1f from Plectreurys tristis (Spider).